We begin with the raw amino-acid sequence, 358 residues long: Holliday junction branch migration complex subunit RuvB (358 aa).

The interval 1 to 24 (MAIKRSHNSPPATEENLLTPNPTI) is disordered. Polar residues predominate over residues 8-22 (NSPPATEENLLTPNP). A large ATPase domain (RuvB-L) region spans residues 13–195 (TEENLLTPNP…FGLIQRLRFY (183 aa)). ATP is bound by residues isoleucine 34, arginine 35, glycine 76, lysine 79, threonine 80, threonine 81, 142–144 (EDY), arginine 185, tyrosine 195, and arginine 232. Threonine 80 contributes to the Mg(2+) binding site. The small ATPAse domain (RuvB-S) stretch occupies residues 196 to 266 (AVEELTAIIL…LAAEGLNQLN (71 aa)). The interval 269–358 (SMGLDWTDRL…KDRSLPLFEF (90 aa)) is head domain (RuvB-H). Arginine 324 and arginine 329 together coordinate DNA.

The protein belongs to the RuvB family. As to quaternary structure, homohexamer. Forms an RuvA(8)-RuvB(12)-Holliday junction (HJ) complex. HJ DNA is sandwiched between 2 RuvA tetramers; dsDNA enters through RuvA and exits via RuvB. An RuvB hexamer assembles on each DNA strand where it exits the tetramer. Each RuvB hexamer is contacted by two RuvA subunits (via domain III) on 2 adjacent RuvB subunits; this complex drives branch migration. In the full resolvosome a probable DNA-RuvA(4)-RuvB(12)-RuvC(2) complex forms which resolves the HJ.

The protein resides in the cytoplasm. It carries out the reaction ATP + H2O = ADP + phosphate + H(+). In terms of biological role, the RuvA-RuvB-RuvC complex processes Holliday junction (HJ) DNA during genetic recombination and DNA repair, while the RuvA-RuvB complex plays an important role in the rescue of blocked DNA replication forks via replication fork reversal (RFR). RuvA specifically binds to HJ cruciform DNA, conferring on it an open structure. The RuvB hexamer acts as an ATP-dependent pump, pulling dsDNA into and through the RuvAB complex. RuvB forms 2 homohexamers on either side of HJ DNA bound by 1 or 2 RuvA tetramers; 4 subunits per hexamer contact DNA at a time. Coordinated motions by a converter formed by DNA-disengaged RuvB subunits stimulates ATP hydrolysis and nucleotide exchange. Immobilization of the converter enables RuvB to convert the ATP-contained energy into a lever motion, pulling 2 nucleotides of DNA out of the RuvA tetramer per ATP hydrolyzed, thus driving DNA branch migration. The RuvB motors rotate together with the DNA substrate, which together with the progressing nucleotide cycle form the mechanistic basis for DNA recombination by continuous HJ branch migration. Branch migration allows RuvC to scan DNA until it finds its consensus sequence, where it cleaves and resolves cruciform DNA. The sequence is that of Holliday junction branch migration complex subunit RuvB from Microcystis aeruginosa (strain NIES-843 / IAM M-2473).